The following is a 68-amino-acid chain: MPGPDVKCFCCRDGKECACGGGECCITGKCCKEGDRTCCGKCSNAACKCADGCKCEGACACTMGNCTC.

Belongs to the metallothionein superfamily. Type 4 family.

Its function is as follows. Metallothioneins have a high content of cysteine residues that bind various heavy metals. This chain is Metallothionein (MT1), found in Lytechinus pictus (Painted sea urchin).